The primary structure comprises 498 residues: ATP synthase subunit beta, chloroplastic (498 aa).

An ATP-binding site is contributed by 172–179 (GGAGVGKT).

This sequence belongs to the ATPase alpha/beta chains family. As to quaternary structure, F-type ATPases have 2 components, CF(1) - the catalytic core - and CF(0) - the membrane proton channel. CF(1) has five subunits: alpha(3), beta(3), gamma(1), delta(1), epsilon(1). CF(0) has four main subunits: a(1), b(1), b'(1) and c(9-12).

It localises to the plastid. The protein localises to the chloroplast thylakoid membrane. It carries out the reaction ATP + H2O + 4 H(+)(in) = ADP + phosphate + 5 H(+)(out). Functionally, produces ATP from ADP in the presence of a proton gradient across the membrane. The catalytic sites are hosted primarily by the beta subunits. This chain is ATP synthase subunit beta, chloroplastic, found in Drimys granadensis.